A 532-amino-acid chain; its full sequence is Putative F-box/LRR-repeat protein At3g42770 (532 aa).

One can recognise an F-box domain in the interval 1–46; it reads MNCLPDELLVQILSFLPTKEATSTSLLSKRWRTLFTLSPNLDFDNS. LRR repeat units follow at residues 113-135, 279-305, and 398-420; these read VSEL…IFTS, IRNV…EIPM, and MNDL…SPKL.

This Arabidopsis thaliana (Mouse-ear cress) protein is Putative F-box/LRR-repeat protein At3g42770.